The following is a 339-amino-acid chain: Phenylalanine--tRNA ligase alpha subunit (339 aa).

Glutamate 254 contributes to the Mg(2+) binding site.

The protein belongs to the class-II aminoacyl-tRNA synthetase family. Phe-tRNA synthetase alpha subunit type 1 subfamily. In terms of assembly, tetramer of two alpha and two beta subunits. The cofactor is Mg(2+).

The protein localises to the cytoplasm. The enzyme catalyses tRNA(Phe) + L-phenylalanine + ATP = L-phenylalanyl-tRNA(Phe) + AMP + diphosphate + H(+). The protein is Phenylalanine--tRNA ligase alpha subunit of Alkaliphilus oremlandii (strain OhILAs) (Clostridium oremlandii (strain OhILAs)).